A 467-amino-acid chain; its full sequence is Chromosomal replication initiator protein DnaA (467 aa).

Positions 1 to 85 are domain I, interacts with DnaA modulators; that stretch reads MTTTLWPQVL…LEVGEYAIES (85 aa). A domain II region spans residues 85 to 130; it reads SFNEPENTSVPQPLRETKAEREAAEKAASSTSKKKSDSPPKKTIKH. Residues 87 to 129 are disordered; the sequence is NEPENTSVPQPLRETKAEREAAEKAASSTSKKKSDSPPKKTIK. Residues 99–109 show a composition bias toward basic and acidic residues; that stretch reads RETKAEREAAE. Positions 131 to 347 are domain III, AAA+ region; the sequence is NLNTNFTFDT…GALKRVGAFA (217 aa). 4 residues coordinate ATP: Gly-175, Gly-177, Lys-178, and Thr-179. Residues 348–467 are domain IV, binds dsDNA; sequence QFTQQLVTVD…FNSLIRIITN (120 aa).

Belongs to the DnaA family. As to quaternary structure, oligomerizes as a right-handed, spiral filament on DNA at oriC.

It localises to the cytoplasm. Plays an essential role in the initiation and regulation of chromosomal replication. ATP-DnaA binds to the origin of replication (oriC) to initiate formation of the DNA replication initiation complex once per cell cycle. Binds the DnaA box (a 9 base pair repeat at the origin) and separates the double-stranded (ds)DNA. Forms a right-handed helical filament on oriC DNA; dsDNA binds to the exterior of the filament while single-stranded (ss)DNA is stabiized in the filament's interior. The ATP-DnaA-oriC complex binds and stabilizes one strand of the AT-rich DNA unwinding element (DUE), permitting loading of DNA polymerase. After initiation quickly degrades to an ADP-DnaA complex that is not apt for DNA replication. Binds acidic phospholipids. This is Chromosomal replication initiator protein DnaA from Hydrogenovibrio crunogenus (strain DSM 25203 / XCL-2) (Thiomicrospira crunogena).